The primary structure comprises 256 residues: Extracellular serine-rich protein ARB_03024 (256 aa).

An N-terminal signal peptide occupies residues 1 to 19 (MVATKSVLSAVALAGVAAA). The disordered stretch occupies residues 135–235 (KIVPQSGSPT…TPTASPGAAA (101 aa)). Residues 149–159 (GTLGGSGGSGG) show a composition bias toward gly residues. 2 stretches are compositionally biased toward low complexity: residues 160 to 204 (SSSS…QSTP) and 215 to 235 (PSATGSGSHSSTPTASPGAAA). Ala-233 carries GPI-anchor amidated alanine lipidation. Residues 234-256 (AAGLKGSAVLAGVVALGAWIGLL) constitute a propeptide, removed in mature form.

The protein localises to the cell membrane. It is found in the secreted. This chain is Extracellular serine-rich protein ARB_03024, found in Arthroderma benhamiae (strain ATCC MYA-4681 / CBS 112371) (Trichophyton mentagrophytes).